The chain runs to 161 residues: Pleiotrophin-A (161 aa).

The signal sequence occupies residues 1 to 23; it reads MRHQHGLFMLALLAFLFVITVLG. 5 cysteine pairs are disulfide-bonded: Cys41–Cys70, Cys49–Cys79, Cys56–Cys83, Cys93–Cys125, and Cys103–Cys135. Chondroitin sulfate binding stretches follow at residues 86-93 and 117-125; these read KKQFGAEC and KRALHNAEC. A disordered region spans residues 136 to 161; sequence GKVTKPKLQESKKKKKEGKNKEKLLD. A chondroitin sulfate A binding region spans residues 141–161; that stretch reads PKLQESKKKKKEGKNKEKLLD.

It belongs to the pleiotrophin family. Expressed in high levels in brain and eye. Lower levels in bone. In the tailbud embryo stage, it is expressed exclusively in the central nervous system, especially in the hind region of the brain.

It is found in the secreted. Secreted growth factor that mediates its signal through cell-surface proteoglycan and non-proteoglycan receptors. Binds cell-surface proteoglycan receptor via their chondroitin sulfate (CS) groups. Thereby regulates many processes like cell proliferation, cell survival, cell growth, cell differentiation and cell migration. Has antibacterial activity against both Gram-positive and Gram-negative bacteria. In Xenopus laevis (African clawed frog), this protein is Pleiotrophin-A (ptn-a).